We begin with the raw amino-acid sequence, 208 residues long: Small ribosomal subunit protein uS4 (208 aa).

Residues 98 to 178 enclose the S4 RNA-binding domain; it reads SRLDNVVYRM…RPKWLEYDAE (81 aa).

This sequence belongs to the universal ribosomal protein uS4 family. In terms of assembly, part of the 30S ribosomal subunit. Contacts protein S5. The interaction surface between S4 and S5 is involved in control of translational fidelity.

One of the primary rRNA binding proteins, it binds directly to 16S rRNA where it nucleates assembly of the body of the 30S subunit. In terms of biological role, with S5 and S12 plays an important role in translational accuracy. This Acetivibrio thermocellus (strain ATCC 27405 / DSM 1237 / JCM 9322 / NBRC 103400 / NCIMB 10682 / NRRL B-4536 / VPI 7372) (Clostridium thermocellum) protein is Small ribosomal subunit protein uS4.